The sequence spans 286 residues: Nucleotide-binding protein APL_0334 (286 aa).

Residue 8–15 (GRSGSGKS) coordinates ATP. 56–59 (DIRN) contacts GTP.

This sequence belongs to the RapZ-like family.

Functionally, displays ATPase and GTPase activities. The protein is Nucleotide-binding protein APL_0334 of Actinobacillus pleuropneumoniae serotype 5b (strain L20).